The primary structure comprises 145 residues: D-aminoacyl-tRNA deacylase (145 aa).

The Gly-cisPro motif, important for rejection of L-amino acids motif lies at 137-138; sequence GP.

Belongs to the DTD family. In terms of assembly, homodimer.

Its subcellular location is the cytoplasm. It catalyses the reaction glycyl-tRNA(Ala) + H2O = tRNA(Ala) + glycine + H(+). The enzyme catalyses a D-aminoacyl-tRNA + H2O = a tRNA + a D-alpha-amino acid + H(+). Functionally, an aminoacyl-tRNA editing enzyme that deacylates mischarged D-aminoacyl-tRNAs. Also deacylates mischarged glycyl-tRNA(Ala), protecting cells against glycine mischarging by AlaRS. Acts via tRNA-based rather than protein-based catalysis; rejects L-amino acids rather than detecting D-amino acids in the active site. By recycling D-aminoacyl-tRNA to D-amino acids and free tRNA molecules, this enzyme counteracts the toxicity associated with the formation of D-aminoacyl-tRNA entities in vivo and helps enforce protein L-homochirality. The protein is D-aminoacyl-tRNA deacylase of Alcanivorax borkumensis (strain ATCC 700651 / DSM 11573 / NCIMB 13689 / SK2).